A 637-amino-acid polypeptide reads, in one-letter code: Extracellular metalloproteinase 10 (637 aa).

An N-terminal signal peptide occupies residues 1–19 (MHGLLLAATLLSLPFNAVA). A propeptide spanning residues 20–245 (HVPPTTGLVR…VHNVVDYVAH (226 aa)) is cleaved from the precursor. N-linked (GlcNAc...) asparagine glycosylation occurs at asparagine 282. Histidine 429 contacts Zn(2+). Glutamate 430 is an active-site residue. Histidine 433 lines the Zn(2+) pocket. An N-linked (GlcNAc...) asparagine glycan is attached at asparagine 502.

This sequence belongs to the peptidase M36 family. Requires Zn(2+) as cofactor.

The protein resides in the secreted. In terms of biological role, secreted metalloproteinase that allows assimilation of proteinaceous substrates. The polypeptide is Extracellular metalloproteinase 10 (MEP10) (Uncinocarpus reesii (strain UAMH 1704)).